The following is a 180-amino-acid chain: Acireductone dioxygenase (180 aa).

H97, H99, E103, and H141 together coordinate Fe(2+). Ni(2+) is bound by residues H97, H99, E103, and H141.

The protein belongs to the acireductone dioxygenase (ARD) family. As to quaternary structure, monomer. It depends on Fe(2+) as a cofactor. Ni(2+) serves as cofactor.

The catalysed reaction is 1,2-dihydroxy-5-(methylsulfanyl)pent-1-en-3-one + O2 = 3-(methylsulfanyl)propanoate + CO + formate + 2 H(+). It carries out the reaction 1,2-dihydroxy-5-(methylsulfanyl)pent-1-en-3-one + O2 = 4-methylsulfanyl-2-oxobutanoate + formate + 2 H(+). It participates in amino-acid biosynthesis; L-methionine biosynthesis via salvage pathway; L-methionine from S-methyl-5-thio-alpha-D-ribose 1-phosphate: step 5/6. Catalyzes 2 different reactions between oxygen and the acireductone 1,2-dihydroxy-3-keto-5-methylthiopentene (DHK-MTPene) depending upon the metal bound in the active site. Fe-containing acireductone dioxygenase (Fe-ARD) produces formate and 2-keto-4-methylthiobutyrate (KMTB), the alpha-ketoacid precursor of methionine in the methionine recycle pathway. Ni-containing acireductone dioxygenase (Ni-ARD) produces methylthiopropionate, carbon monoxide and formate, and does not lie on the methionine recycle pathway. In Acidiphilium cryptum (strain JF-5), this protein is Acireductone dioxygenase.